The sequence spans 372 residues: Cytochrome b (372 aa).

Transmembrane regions (helical) follow at residues 25-45 (FGSM…FLAI), 69-90 (WMMQ…YIHI), 105-125 (WLSG…GYVL), and 170-190 (FFAL…IHIM). The heme b site is built by His75 and His89. 2 residues coordinate heme b: His174 and His188. His193 contributes to the a ubiquinone binding site. 4 helical membrane-spanning segments follow: residues 218–238 (HKDM…MSFM), 280–300 (LGGT…PFTH), 312–332 (LMQF…WAAT), and 339–358 (FTTI…IMNP).

Belongs to the cytochrome b family. In terms of assembly, the cytochrome bc1 complex contains 3 respiratory subunits (MT-CYB, CYC1 and UQCRFS1), 2 core proteins (UQCRC1 and UQCRC2) and probably 6 low-molecular weight proteins. Heme b is required as a cofactor.

It is found in the mitochondrion inner membrane. Functionally, component of the ubiquinol-cytochrome c reductase complex (complex III or cytochrome b-c1 complex) that is part of the mitochondrial respiratory chain. The b-c1 complex mediates electron transfer from ubiquinol to cytochrome c. Contributes to the generation of a proton gradient across the mitochondrial membrane that is then used for ATP synthesis. This Pantherophis obsoletus (Black ratsnake) protein is Cytochrome b (MT-CYB).